Consider the following 382-residue polypeptide: Queuine tRNA-ribosyltransferase (382 aa).

Aspartate 96 (proton acceptor) is an active-site residue. Substrate contacts are provided by residues 96-100, aspartate 151, glutamine 194, and glycine 221; that span reads DSGGF. Residues 252–258 form an RNA binding region; the sequence is GVGAPDS. Residue aspartate 271 is the Nucleophile of the active site. Residues 276-280 are RNA binding; important for wobble base 34 recognition; that stretch reads TRIAR. Residues cysteine 309, cysteine 311, cysteine 314, and histidine 340 each coordinate Zn(2+).

This sequence belongs to the queuine tRNA-ribosyltransferase family. In terms of assembly, homodimer. Within each dimer, one monomer is responsible for RNA recognition and catalysis, while the other monomer binds to the replacement base PreQ1. It depends on Zn(2+) as a cofactor.

The enzyme catalyses 7-aminomethyl-7-carbaguanine + guanosine(34) in tRNA = 7-aminomethyl-7-carbaguanosine(34) in tRNA + guanine. Its pathway is tRNA modification; tRNA-queuosine biosynthesis. Its function is as follows. Catalyzes the base-exchange of a guanine (G) residue with the queuine precursor 7-aminomethyl-7-deazaguanine (PreQ1) at position 34 (anticodon wobble position) in tRNAs with GU(N) anticodons (tRNA-Asp, -Asn, -His and -Tyr). Catalysis occurs through a double-displacement mechanism. The nucleophile active site attacks the C1' of nucleotide 34 to detach the guanine base from the RNA, forming a covalent enzyme-RNA intermediate. The proton acceptor active site deprotonates the incoming PreQ1, allowing a nucleophilic attack on the C1' of the ribose to form the product. After dissociation, two additional enzymatic reactions on the tRNA convert PreQ1 to queuine (Q), resulting in the hypermodified nucleoside queuosine (7-(((4,5-cis-dihydroxy-2-cyclopenten-1-yl)amino)methyl)-7-deazaguanosine). The chain is Queuine tRNA-ribosyltransferase from Lactococcus lactis subsp. cremoris (strain MG1363).